Reading from the N-terminus, the 167-residue chain is NAD(P)H-quinone oxidoreductase subunit I, chloroplastic (167 aa).

2 consecutive 4Fe-4S ferredoxin-type domains span residues 55–84 (GRIHFEFDKCIACEVCVRVCPIDLPVVDWK) and 95–124 (LNYSIDFGICIFCGNCVEYCPTNCLSMTEE). 8 residues coordinate [4Fe-4S] cluster: cysteine 64, cysteine 67, cysteine 70, cysteine 74, cysteine 104, cysteine 107, cysteine 110, and cysteine 114.

This sequence belongs to the complex I 23 kDa subunit family. NDH is composed of at least 16 different subunits, 5 of which are encoded in the nucleus. Requires [4Fe-4S] cluster as cofactor.

The protein resides in the plastid. It is found in the chloroplast thylakoid membrane. The enzyme catalyses a plastoquinone + NADH + (n+1) H(+)(in) = a plastoquinol + NAD(+) + n H(+)(out). It catalyses the reaction a plastoquinone + NADPH + (n+1) H(+)(in) = a plastoquinol + NADP(+) + n H(+)(out). Its function is as follows. NDH shuttles electrons from NAD(P)H:plastoquinone, via FMN and iron-sulfur (Fe-S) centers, to quinones in the photosynthetic chain and possibly in a chloroplast respiratory chain. The immediate electron acceptor for the enzyme in this species is believed to be plastoquinone. Couples the redox reaction to proton translocation, and thus conserves the redox energy in a proton gradient. In Lepidium virginicum (Virginia pepperweed), this protein is NAD(P)H-quinone oxidoreductase subunit I, chloroplastic.